The sequence spans 423 residues: Glutamyl-tRNA reductase (423 aa).

Residues 49 to 52 (TCNR), S107, 112 to 114 (EPQ), and Q118 contribute to the substrate site. Residue C50 is the Nucleophile of the active site. 187 to 192 (GAGETI) is an NADP(+) binding site.

Belongs to the glutamyl-tRNA reductase family. Homodimer.

The catalysed reaction is (S)-4-amino-5-oxopentanoate + tRNA(Glu) + NADP(+) = L-glutamyl-tRNA(Glu) + NADPH + H(+). It functions in the pathway porphyrin-containing compound metabolism; protoporphyrin-IX biosynthesis; 5-aminolevulinate from L-glutamyl-tRNA(Glu): step 1/2. Catalyzes the NADPH-dependent reduction of glutamyl-tRNA(Glu) to glutamate 1-semialdehyde (GSA). In Pseudoalteromonas atlantica (strain T6c / ATCC BAA-1087), this protein is Glutamyl-tRNA reductase.